The sequence spans 410 residues: Translation initiation factor 2 subunit gamma (410 aa).

One can recognise a tr-type G domain in the interval 6-203; sequence QSEVNIGMVG…AIQEFIPTPK (198 aa). Residues 15–22 are G1; sequence GHVDHGKT. The Mg(2+) site is built by Asp-18, Thr-22, Gly-43, and Ser-45. Residue 18-23 coordinates GTP; the sequence is DHGKTS. The G2 stretch occupies residues 43-47; sequence GISIR. Positions 58, 61, 73, and 76 each coordinate Zn(2+). The segment at 90–93 is G3; sequence DAPG. Residues 146–149 and 181–183 each bind GTP; these read NKID and SAH. The G4 stretch occupies residues 146–149; the sequence is NKID. The interval 181 to 183 is G5; the sequence is SAH.

Belongs to the TRAFAC class translation factor GTPase superfamily. Classic translation factor GTPase family. EIF2G subfamily. As to quaternary structure, heterotrimer composed of an alpha, a beta and a gamma chain. It depends on Mg(2+) as a cofactor.

It carries out the reaction GTP + H2O = GDP + phosphate + H(+). Its function is as follows. eIF-2 functions in the early steps of protein synthesis by forming a ternary complex with GTP and initiator tRNA. The chain is Translation initiation factor 2 subunit gamma from Methanococcus maripaludis (strain C6 / ATCC BAA-1332).